The sequence spans 439 residues: Maintenance of mitochondrial morphology protein 1 (439 aa).

Residues 1–76 (MSQDLIETTA…NGNTWSFTQG (76 aa)) are Lumenal-facing. Residues 77 to 97 (LVIGQVSVIFIIIVFVKFFVF) traverse the membrane as a helical segment. Residues 98–439 (ADSSSHIPTK…TPGEYVNSNI (342 aa)) are Cytoplasmic-facing. Disordered regions lie at residues 125–145 (KHSN…SLDS), 309–336 (MNGY…DGGT), and 405–425 (REPV…GTSA). Positions 165 to 395 (ASESLDWFNV…EPRFQVVRLP (231 aa)) constitute an SMP-LTD domain. Composition is skewed to low complexity over residues 315 to 326 (ENANGDGASSSN) and 410 to 424 (KKTT…NGTS).

This sequence belongs to the MMM1 family. Homodimer. Component of the ER-mitochondria encounter structure (ERMES) or MDM complex, composed of MMM1, MDM10, MDM12 and MDM34. An MMM1 homodimer associates with one molecule of MDM12 on each side in a pairwise head-to-tail manner, and the SMP-LTD domains of MMM1 and MDM12 generate a continuous hydrophobic tunnel for phospholipid trafficking.

The protein localises to the endoplasmic reticulum membrane. Functionally, component of the ERMES/MDM complex, which serves as a molecular tether to connect the endoplasmic reticulum (ER) and mitochondria. Components of this complex are involved in the control of mitochondrial shape and protein biogenesis, and function in nonvesicular lipid trafficking between the ER and mitochondria. The MDM12-MMM1 subcomplex functions in the major beta-barrel assembly pathway that is responsible for biogenesis of all outer membrane beta-barrel proteins, and acts in a late step after the SAM complex. The MDM10-MDM12-MMM1 subcomplex further acts in the TOM40-specific pathway after the action of the MDM12-MMM1 complex. Essential for establishing and maintaining the structure of mitochondria and maintenance of mtDNA nucleoids. This chain is Maintenance of mitochondrial morphology protein 1, found in Candida albicans (strain WO-1) (Yeast).